The chain runs to 683 residues: DNA ligase (683 aa).

NAD(+) is bound by residues 35 to 39 (DAEYD), 81 to 82 (SL), and E112. Catalysis depends on K114, which acts as the N6-AMP-lysine intermediate. NAD(+)-binding residues include R135, E170, K277, and K301. Residues C395, C398, C411, and C417 each contribute to the Zn(2+) site. The 83-residue stretch at 601 to 683 (SSNSVLNNKV…YRMINSEVSE (83 aa)) folds into the BRCT domain.

Belongs to the NAD-dependent DNA ligase family. LigA subfamily. Mg(2+) is required as a cofactor. Requires Mn(2+) as cofactor.

The catalysed reaction is NAD(+) + (deoxyribonucleotide)n-3'-hydroxyl + 5'-phospho-(deoxyribonucleotide)m = (deoxyribonucleotide)n+m + AMP + beta-nicotinamide D-nucleotide.. Functionally, DNA ligase that catalyzes the formation of phosphodiester linkages between 5'-phosphoryl and 3'-hydroxyl groups in double-stranded DNA using NAD as a coenzyme and as the energy source for the reaction. It is essential for DNA replication and repair of damaged DNA. This Wolbachia sp. subsp. Brugia malayi (strain TRS) protein is DNA ligase.